A 233-amino-acid polypeptide reads, in one-letter code: Demethylmenaquinone methyltransferase (233 aa).

Residues Thr58, Asp79, and 106–107 (NA) contribute to the S-adenosyl-L-methionine site.

It belongs to the class I-like SAM-binding methyltransferase superfamily. MenG/UbiE family.

The enzyme catalyses a 2-demethylmenaquinol + S-adenosyl-L-methionine = a menaquinol + S-adenosyl-L-homocysteine + H(+). Its pathway is quinol/quinone metabolism; menaquinone biosynthesis; menaquinol from 1,4-dihydroxy-2-naphthoate: step 2/2. Its function is as follows. Methyltransferase required for the conversion of demethylmenaquinol (DMKH2) to menaquinol (MKH2). The sequence is that of Demethylmenaquinone methyltransferase from Bacillus velezensis (strain DSM 23117 / BGSC 10A6 / LMG 26770 / FZB42) (Bacillus amyloliquefaciens subsp. plantarum).